A 3433-amino-acid chain; its full sequence is Genome polyprotein (3433 aa).

Positions 2–15 are interaction with host EXOC1; that stretch reads SKKPGGPGKSRAVN. The Cytoplasmic portion of the chain corresponds to 2 to 108; that stretch reads SKKPGGPGKS…SSKQKKRGGK (107 aa). The interval 37–72 is hydrophobic; homodimerization of capsid protein C; sequence LIDGKGPIRFVLALLAFFRFTAIAPTRAVLDRWRGV. Residues 106–123 constitute a propeptide, ER anchor for the capsid protein C, removed in mature form by serine protease NS3; sequence GGKTGIAVMIGLIASVGA. Residues 109 to 129 traverse the membrane as a helical segment; sequence TGIAVMIGLIASVGAVTLSNF. Residues 130–248 are Extracellular-facing; sequence QGKVMMTVNA…KATRYLVKTE (119 aa). The N-linked (GlcNAc...) asparagine; by host glycan is linked to asparagine 138. A helical transmembrane segment spans residues 249–269; it reads SWILRNPGYALVAAVIGWMLG. Over 270–275 the chain is Cytoplasmic; it reads SNTMQR. Residues 276 to 290 traverse the membrane as a helical segment; the sequence is VVFVVLLLLVAPAYS. The Extracellular segment spans residues 291–743; the sequence is FNCLGMSNRD…QVFGGAFRSL (453 aa). 6 disulfides stabilise this stretch: cysteine 293–cysteine 320, cysteine 350–cysteine 406, cysteine 350–cysteine 411, cysteine 364–cysteine 395, cysteine 382–cysteine 406, and cysteine 382–cysteine 411. Positions 388 to 401 are fusion peptide; it reads DRGWGNGCGLFGKG. Residue asparagine 444 is glycosylated (N-linked (GlcNAc...) asparagine; by host). Intrachain disulfides connect cysteine 480-cysteine 578 and cysteine 595-cysteine 626. The chain crosses the membrane as a helical span at residues 744-764; the sequence is FGGMSWITQGLLGALLLWMGI. Topologically, residues 765–770 are cytoplasmic; the sequence is NARDRS. Residues 771 to 791 traverse the membrane as a helical segment; sequence IALTFLAVGGVLLFLSVNVHA. At 792–1216 the chain is on the extracellular side; sequence DTGCAIDISR…AFAESNSGGD (425 aa). Cystine bridges form between cysteine 795-cysteine 806 and cysteine 846-cysteine 934. N-linked (GlcNAc...) asparagine; by host glycans are attached at residues asparagine 921, asparagine 966, and asparagine 998. 4 disulfides stabilise this stretch: cysteine 970–cysteine 1014, cysteine 1071–cysteine 1120, cysteine 1082–cysteine 1103, and cysteine 1104–cysteine 1107. A helical membrane pass occupies residues 1217 to 1237; the sequence is VVHLALMATFKIQPVFMVASF. Topologically, residues 1238-1245 are cytoplasmic; that stretch reads LKARWTNQ. Residues 1246–1268 form a helical membrane-spanning segment; that stretch reads ENILLMLAAVFFQMAYHDARQIL. The Lumenal segment spans residues 1269 to 1288; the sequence is LWEIPDVLNSLAVAWMILRA. A helical membrane pass occupies residues 1289–1309; that stretch reads ITFTTTSNVVVPLLALLTPGL. The Cytoplasmic segment spans residues 1310-1313; sequence RCLN. Residues 1314 to 1331 form a helical membrane-spanning segment; sequence LDVYRILLLMVGIGSLIR. Topologically, residues 1332–1345 are lumenal; the sequence is EKRSAAAKKKGASL. Residues 1346–1366 form a helical membrane-spanning segment; the sequence is LCLALASTGLFNPMILAAGLI. Residues 1367 to 1375 are Cytoplasmic-facing; it reads ACDPNRKRG. A helical membrane pass occupies residues 1376–1396; the sequence is WPATEVMTAVGLMFAIVGGLA. Residues 1397 to 1399 are Lumenal-facing; the sequence is ELD. Residues 1400–1420 form a helical membrane-spanning segment; that stretch reads IDSMAIPMTIAGLMFAAFVIS. Over 1421-1477 the chain is Cytoplasmic; the sequence is GKSTDMWIERTADISWESDAEITGSSERVDVRLDDDGNFQLMNDPGAPWKIWMLRMV. The tract at residues 1428–1467 is interacts with and activates NS3 protease; it reads IERTADISWESDAEITGSSERVDVRLDDDGNFQLMNDPGA. Residues 1478–1498 constitute an intramembrane region (helical); that stretch reads CLAISAYTPWAILPSVVGFWI. Residues 1499 to 2174 lie on the Cytoplasmic side of the membrane; it reads TLQYTKRGGV…RMALEELPDA (676 aa). Positions 1506–1683 constitute a Peptidase S7 domain; the sequence is GGVLWDTPSP…ERMDEPIPAG (178 aa). Catalysis depends on charge relay system; for serine protease NS3 activity residues histidine 1556, aspartate 1580, and serine 1640. Residues 1686 to 1842 enclose the Helicase ATP-binding domain; it reads PEMLRKKQIT…ESNSPISDLQ (157 aa). The segment at 1690-1693 is important for RNA-binding; the sequence is RKKQ. Residue 1699–1706 coordinates ATP; that stretch reads LHPGAGKT. Residues 1790–1793 carry the DEAH box motif; sequence DEAH. In terms of domain architecture, Helicase C-terminal spans 1853–2018; sequence GYEWITEYTG…GLIAQFYQPE (166 aa). Lysine 1894 carries the N6-acetyllysine; by host modification. The regulates the ATPase activity of NS3 helicase stretch occupies residues 2169 to 2173; that stretch reads EELPD. A helical membrane pass occupies residues 2175 to 2195; that stretch reads LQTIALIALLSVMTMGVFFLL. Residues 2196-2200 are Lumenal-facing; that stretch reads MQRKG. Residues 2201 to 2221 constitute an intramembrane region (helical); sequence IGKIGLGGAVLGVATFFCWMA. Residue glutamate 2222 is a topological domain, lumenal. Residues 2223–2243 form a helical membrane-spanning segment; it reads VPGTKIAGMLLLSLLLMIVLI. Residues 2244-2258 are Cytoplasmic-facing; the sequence is PEPEKQRSQTDNQLA. A helical transmembrane segment spans residues 2259–2279; sequence VFLICVMTLVSAVAANEMGWL. Topologically, residues 2280 to 2312 are lumenal; sequence DKTKSDISSLFGQRIEVKENFSMGEFLLDLRPA. The helical intramembrane region spans 2313 to 2333; sequence TAWSLYAVTTAVLTPLLKHLI. At 2334 to 2380 the chain is on the lumenal side; it reads TSDYINTSLTSINVQASALFTLARGFPFVDVGVSALLLAAGCWGQVT. Residues 2381–2401 traverse the membrane as a helical segment; sequence LTVTVTAATLLFCHYAYMVPG. Residues 2402-2444 lie on the Cytoplasmic side of the membrane; the sequence is WQAEAMRSAQRRTAAGIMKNAVVDGIVATDVPELERTTPIMQK. Residues 2445 to 2465 form a helical membrane-spanning segment; the sequence is KVGQIMLILVSLAAVVVNPSV. At 2466–2470 the chain is on the lumenal side; sequence KTVRE. Residues 2471–2491 form a helical membrane-spanning segment; sequence AGILITAAAVTLWENGASSVW. Residues 2492-3433 lie on the Cytoplasmic side of the membrane; it reads NATTAIGLCH…DTTLVEDTVL (942 aa). Residues 2529–2794 form the mRNA cap 0-1 NS5-type MT domain; sequence GGAKGRTLGE…DVNLGSGTRA (266 aa). Serine 2584 is an S-adenosyl-L-methionine binding site. Serine 2584 bears the Phosphoserine mark. Catalysis depends on lysine 2589, which acts as the For 2'-O-MTase activity. Positions 2614, 2615, 2632, 2633, 2639, 2659, 2660, 2674, and 2675 each coordinate S-adenosyl-L-methionine. Residue aspartate 2674 is the For 2'-O-MTase activity of the active site. Active-site for 2'-O-MTase activity residues include lysine 2710 and glutamate 2746. An S-adenosyl-L-methionine-binding site is contributed by tyrosine 2748. A Nuclear localization signal motif is present at residues 2917–2919; that stretch reads REK. Zn(2+) is bound by residues glutamate 2968, histidine 2972, cysteine 2977, and cysteine 2980. In terms of domain architecture, RdRp catalytic spans 3058–3210; the sequence is GKIYADDTAG…KPLDDRFATS (153 aa). Histidine 3245, cysteine 3261, and cysteine 3380 together coordinate Zn(2+). The PDZ-binding motif lies at 3431-3433; the sequence is TVL.

It in the N-terminal section; belongs to the class I-like SAM-binding methyltransferase superfamily. mRNA cap 0-1 NS5-type methyltransferase family. As to quaternary structure, homodimer. Interacts (via N-terminus) with host EXOC1 (via C-terminus); this interaction results in EXOC1 degradation through the proteasome degradation pathway. Interacts with host DDX56; this interaction plays an important role in genomic RNA encapsidation. In terms of assembly, forms heterodimers with envelope protein E in the endoplasmic reticulum and Golgi. Homodimer; in the endoplasmic reticulum and Golgi. As to quaternary structure, homodimer; Homohexamer when secreted. NS1 interacts with NS4B. Interacts with host complement protein CFH; this interaction leads to the degradation of C3. In terms of assembly, forms a heterodimer with serine protease NS3. May form homooligomers. Interacts with human SPCS1. Forms a heterodimer with NS2B. Interacts with NS4B. Interacts with unphosphorylated RNA-directed RNA polymerase NS5; this interaction stimulates RNA-directed RNA polymerase NS5 guanylyltransferase activity. As to quaternary structure, interacts with host RTN3; this interaction is important to remodel host cell membranes. In terms of assembly, interacts with Serine protease/Helicase NS3. Interacts with NS1. Homodimer. Interacts with host STAT2; this interaction inhibits the phosphorylation of the latter, and, when all viral proteins are present (polyprotein), targets STAT2 for degradation. Post-translationally, specific enzymatic cleavages in vivo yield mature proteins. Cleavages in the lumen of endoplasmic reticulum are performed by host signal peptidase, whereas cleavages in the cytoplasmic side are performed by serine protease NS3. Signal cleavage at the 2K-4B site requires a prior NS3 protease-mediated cleavage at the 4A-2K site. Cleaved in post-Golgi vesicles by a host furin, releasing the mature small envelope protein M, and peptide pr. This cleavage is incomplete as up to 30% of viral particles still carry uncleaved prM. In terms of processing, N-glycosylated. Post-translationally, N-glycosylated. The excreted form is glycosylated and this is required for efficient secretion of the protein from infected cells. Acetylated by host KAT5. Acetylation modulates NS3 RNA-binding and unwinding activities and plays an important positive role for viral replication. In terms of processing, phosphorylated on serines residues. This phosphorylation may trigger NS5 nuclear localization.

It localises to the virion. The protein localises to the host nucleus. The protein resides in the host cytoplasm. It is found in the host perinuclear region. Its subcellular location is the secreted. It localises to the virion membrane. The protein localises to the host endoplasmic reticulum membrane. It catalyses the reaction Selective hydrolysis of -Xaa-Xaa-|-Yaa- bonds in which each of the Xaa can be either Arg or Lys and Yaa can be either Ser or Ala.. It carries out the reaction RNA(n) + a ribonucleoside 5'-triphosphate = RNA(n+1) + diphosphate. The enzyme catalyses a ribonucleoside 5'-triphosphate + H2O = a ribonucleoside 5'-diphosphate + phosphate + H(+). The catalysed reaction is ATP + H2O = ADP + phosphate + H(+). It catalyses the reaction a 5'-end (5'-triphosphoguanosine)-ribonucleoside in mRNA + S-adenosyl-L-methionine = a 5'-end (N(7)-methyl 5'-triphosphoguanosine)-ribonucleoside in mRNA + S-adenosyl-L-homocysteine. It carries out the reaction a 5'-end (N(7)-methyl 5'-triphosphoguanosine)-ribonucleoside in mRNA + S-adenosyl-L-methionine = a 5'-end (N(7)-methyl 5'-triphosphoguanosine)-(2'-O-methyl-ribonucleoside) in mRNA + S-adenosyl-L-homocysteine + H(+). Its function is as follows. Plays a role in virus budding by binding to the cell membrane and gathering the viral RNA into a nucleocapsid that forms the core of a mature virus particle. During virus entry, may induce genome penetration into the host cytoplasm after hemifusion induced by the surface proteins. Can migrate to the cell nucleus where it modulates host functions. Overcomes the anti-viral effects of host EXOC1 by sequestering and degrading the latter through the proteasome degradation pathway. In terms of biological role, inhibits RNA silencing by interfering with host Dicer. Functionally, prevents premature fusion activity of envelope proteins in trans-Golgi by binding to envelope protein E at pH6.0. After virion release in extracellular space, gets dissociated from E dimers. Acts as a chaperone for envelope protein E during intracellular virion assembly by masking and inactivating envelope protein E fusion peptide. prM is the only viral peptide matured by host furin in the trans-Golgi network probably to avoid catastrophic activation of the viral fusion activity in acidic Golgi compartment prior to virion release. prM-E cleavage is inefficient, and many virions are only partially matured. These uncleaved prM would play a role in immune evasion. Its function is as follows. May play a role in virus budding. Exerts cytotoxic effects by activating a mitochondrial apoptotic pathway through M ectodomain. May display a viroporin activity. In terms of biological role, binds to host cell surface receptor and mediates fusion between viral and cellular membranes. Envelope protein is synthesized in the endoplasmic reticulum in the form of heterodimer with protein prM. They play a role in virion budding in the ER, and the newly formed immature particle is covered with 60 spikes composed of heterodimer between precursor prM and envelope protein E. The virion is transported to the Golgi apparatus where the low pH causes dissociation of PrM-E heterodimers and formation of E homodimers. prM-E cleavage is inefficient, and many virions are only partially matured. These uncleaved prM would play a role in immune evasion. Functionally, involved in immune evasion, pathogenesis and viral replication. Once cleaved off the polyprotein, is targeted to three destinations: the viral replication cycle, the plasma membrane and the extracellular compartment. Essential for viral replication. Required for formation of the replication complex and recruitment of other non-structural proteins to the ER-derived membrane structures. Excreted as a hexameric lipoparticle that plays a role against host immune response. Antagonizing the complement function. Binds to the host macrophages and dendritic cells. Inhibits signal transduction originating from Toll-like receptor 3 (TLR3). Component of the viral RNA replication complex that functions in virion assembly and antagonizes the host alpha/beta interferon antiviral response. Its function is as follows. Required cofactor for the serine protease function of NS3. May have membrane-destabilizing activity and form viroporins. In terms of biological role, displays three enzymatic activities: serine protease, NTPase and RNA helicase. NS3 serine protease, in association with NS2B, performs its autocleavage and cleaves the polyprotein at dibasic sites in the cytoplasm: C-prM, NS2A-NS2B, NS2B-NS3, NS3-NS4A, NS4A-2K and NS4B-NS5. NS3 RNA helicase binds RNA and unwinds dsRNA in the 3' to 5' direction. NS3 supports the separation of RNA daughter and template strands during viral replication. The helicase part is involved in the inhibition of phosphorylation of host STAT1, and thereby inhibition of host type-I IFN signaling. In addition, NS3 assists the initiation of replication by unwinding the RNA secondary structure in the 3' non-translated region (NTR). Inhibits STAT2 translocation in the nucleus after IFN-alpha treatment. Functionally, facilitates host membrane remodelling necessary for viral replication by interacting with host RTN3. Regulates the ATPase activity of the NS3 helicase activity. NS4A allows NS3 helicase to conserve energy during unwinding. Functions as a signal peptide for NS4B and is required for the interferon antagonism activity of the latter. Its function is as follows. Induces the formation of ER-derived membrane vesicles where the viral replication takes place. Inhibits interferon (IFN)-induced host STAT1 phosphorylation and nuclear translocation, thereby preventing the establishment of cellular antiviral state by blocking the IFN-alpha/beta pathway. Inhibits STAT2 translocation in the nucleus after IFN-alpha treatment. In terms of biological role, replicates the viral (+) and (-) genome, and performs the capping of genomes in the cytoplasm. NS5 methylates viral RNA cap at guanine N-7 and ribose 2'-O positions. Besides its role in RNA genome replication, also prevents the establishment of cellular antiviral state by blocking the interferon-alpha/beta (IFN-alpha/beta) signaling pathway. Inhibits host JAK1 and TYK2 phosphorylation, thereby preventing activation of JAK-STAT signaling pathway. The protein is Genome polyprotein of Aedes (Tropical bont tick).